The chain runs to 171 residues: Adenine phosphoribosyltransferase (171 aa).

This sequence belongs to the purine/pyrimidine phosphoribosyltransferase family. Homodimer.

It localises to the cytoplasm. It carries out the reaction AMP + diphosphate = 5-phospho-alpha-D-ribose 1-diphosphate + adenine. The protein operates within purine metabolism; AMP biosynthesis via salvage pathway; AMP from adenine: step 1/1. Functionally, catalyzes a salvage reaction resulting in the formation of AMP, that is energically less costly than de novo synthesis. The protein is Adenine phosphoribosyltransferase of Mycoplasma mobile (strain ATCC 43663 / 163K / NCTC 11711) (Mesomycoplasma mobile).